A 693-amino-acid polypeptide reads, in one-letter code: Transforming growth factor beta activator LRRC33 (693 aa).

The signal sequence occupies residues 1–19; that stretch reads MEFPPLWLCLGFHFLIVEW. The Extracellular portion of the chain corresponds to 20–651; that stretch reads RSGPGTATAA…CKWEQVDTGL (632 aa). The 28-residue stretch at 29–56 folds into the LRRNT domain; sequence ASQGGCKVVDGVADCRGLNLASVPSSLP. 10 LRR repeats span residues 58 to 79, 82 to 103, 106 to 127, 133 to 155, 158 to 179, 182 to 203, 206 to 227, 228 to 239, 251 to 272, and 273 to 294; these read HSRM…SLQA, RLEN…AFRE, HLRN…SAAA, GLRR…MLQN, SLEV…IFEG, HLVE…AFDG, ELRR…SLTQ, LRFLNVSYNILE, ELEI…PQCG, and KLHT…YNTS. N-linked (GlcNAc...) asparagine glycans are attached at residues Asn74 and Asn85. Asn155 carries an N-linked (GlcNAc...) asparagine glycan. The N-linked (GlcNAc...) asparagine glycan is linked to Asn232. N-linked (GlcNAc...) asparagine glycosylation is found at Asn292, Asn309, and Asn312. LRR repeat units lie at residues 329–350, 353–374, 377–398, 403–424, 427–448, 463–484, 486–507, 512–533, 537–558, 559–580, and 585–605; these read ALRF…FLKK, SLSH…EHEP, ALTE…PGLT, NLRV…LFDN, SITT…VPVD, SLRS…PFQG, SLTH…SPLW, TLQV…MDFS, NLRA…KGSL, ALRT…VVSE, and GLQT…EGWG. Asn408 and Asn424 each carry an N-linked (GlcNAc...) asparagine glycan. N-linked (GlcNAc...) asparagine glycosylation is present at Asn500. Positions 606-644 constitute an LRRCT domain; sequence ALQQHFKTVADLSMVTCNLSSKIVRVVELPEGLPQGCKW. Asn623 is a glycosylation site (N-linked (GlcNAc...) asparagine). The helical transmembrane segment at 652–672 threads the bilayer; it reads FYLVLILPSCLTLLVACTVVF. Over 673–693 the chain is Cytoplasmic; that stretch reads LTFKKPLLQVIKSRCHWSSIY.

The protein belongs to the LRRC32/LRRC33 family. Interacts with TGFB1; associates via disulfide bonds with the Latency-associated peptide chain (LAP) regulatory chain of TGFB1, leading to regulate activation of TGF-beta-1. Interacts (via LRR repeats) with TLR2, TLR3, TLR4, TLR9 and probably other Toll-like receptors. Interacts with CYBB/NOX2; the interaction is direct. N-glycosylated. Mainly expressed in cells of hematopoietic origin, such as in immune organs such as lymph nodes, thymus and spleen. Among leukocytes, expressed at higher level in myeloid cell such as macrophages, neutrophils and dendritic cells. Highly expressed in central nervous system-resident macrophages, including microglia and perivascular macrophages.

It localises to the cell membrane. The protein localises to the endoplasmic reticulum membrane. In terms of biological role, key regulator of transforming growth factor beta-1 (TGFB1) specifically required for microglia function in the nervous system. Required for activation of latent TGF-beta-1 in macrophages and microglia: associates specifically via disulfide bonds with the Latency-associated peptide (LAP), which is the regulatory chain of TGFB1, and regulates integrin-dependent activation of TGF-beta-1. TGF-beta-1 activation mediated by LRRC33/NRROS is highly localized: there is little spreading of TGF-beta-1 activated from one microglial cell to neighboring microglia, suggesting the existence of localized and selective activation of TGF-beta-1 by LRRC33/NRROS. Indirectly plays a role in Toll-like receptor (TLR) signaling: ability to inhibit TLR-mediated NF-kappa-B activation and cytokine production is probably a consequence of its role in TGF-beta-1 signaling. This Mus musculus (Mouse) protein is Transforming growth factor beta activator LRRC33.